The primary structure comprises 428 residues: Cyclic AMP-responsive element-binding protein 3-like protein 4 (428 aa).

Residues Met-1–Asn-68 form a required for transcriptional activation region. The Cytoplasmic portion of the chain corresponds to Met-1–Ser-294. Residues Tyr-71–Val-111 are disordered. The bZIP domain maps to Ile-216–Leu-279. The segment at Lys-218–Arg-247 is basic motif. Residues Leu-258–Leu-279 form a leucine-zipper region. A helical; Signal-anchor for type II membrane protein transmembrane segment spans residues Thr-295–Phe-315. At Arg-316–Met-428 the chain is on the lumenal side. The disordered stretch occupies residues Asn-339–Met-428. Over residues Thr-354–Arg-368 the composition is skewed to basic and acidic residues. N-linked (GlcNAc...) asparagine glycosylation is present at Asn-418.

It belongs to the bZIP family. ATF subfamily. In terms of assembly, binds DNA as a dimer. Controlled by regulated intramembrane proteolysis (RIP). A fragment containing the cytoplasmic transcription factor domain is released by proteolysis. The cleavage seems to be performed sequentially by site-1 and site-2 proteases (PS1 and PS2).

Its subcellular location is the endoplasmic reticulum membrane. The protein localises to the nucleus. Functionally, transcriptional activator. This Xenopus tropicalis (Western clawed frog) protein is Cyclic AMP-responsive element-binding protein 3-like protein 4 (creb3l4).